The chain runs to 110 residues: Probable ribonuclease HepT (110 aa).

Residues arginine 75 and histidine 80 contribute to the active site. The RX(4)HXY motif signature appears at 75-82 (RDKLIHAY). Tyrosine 82 carries the post-translational modification O-di-AMP-tyrosine.

It belongs to the HepT RNase toxin family. Modified by cognate antitoxin MntA; probably at least 2 successive AMPylation events occur on Tyr-82.

In terms of biological role, toxic component of a type VII toxin-antitoxin (TA) system. Overexpression in E.coli inhibits cell growth. Neutralized by cognate antitoxin MntA. Neutralization is probably due to AMPylation by MntA. Probably an RNAase. In Thermococcus cleftensis (strain DSM 27260 / KACC 17922 / CL1), this protein is Probable ribonuclease HepT.